The chain runs to 206 residues: Small ribosomal subunit protein uS4 (206 aa).

Positions 96 to 156 constitute an S4 RNA-binding domain; it reads GRLDNVVYRM…EKSKKQARIK (61 aa).

The protein belongs to the universal ribosomal protein uS4 family. In terms of assembly, part of the 30S ribosomal subunit. Contacts protein S5. The interaction surface between S4 and S5 is involved in control of translational fidelity.

In terms of biological role, one of the primary rRNA binding proteins, it binds directly to 16S rRNA where it nucleates assembly of the body of the 30S subunit. Its function is as follows. With S5 and S12 plays an important role in translational accuracy. In Pasteurella multocida (strain Pm70), this protein is Small ribosomal subunit protein uS4.